A 275-amino-acid polypeptide reads, in one-letter code: 2,3,4,5-tetrahydropyridine-2,6-dicarboxylate N-succinyltransferase (275 aa).

The substrate site is built by Arg106 and Asp143.

The protein belongs to the transferase hexapeptide repeat family. As to quaternary structure, homotrimer.

Its subcellular location is the cytoplasm. The enzyme catalyses (S)-2,3,4,5-tetrahydrodipicolinate + succinyl-CoA + H2O = (S)-2-succinylamino-6-oxoheptanedioate + CoA. Its pathway is amino-acid biosynthesis; L-lysine biosynthesis via DAP pathway; LL-2,6-diaminopimelate from (S)-tetrahydrodipicolinate (succinylase route): step 1/3. The protein is 2,3,4,5-tetrahydropyridine-2,6-dicarboxylate N-succinyltransferase of Burkholderia mallei (strain NCTC 10247).